Here is a 30-residue protein sequence, read N- to C-terminus: GVPVCGETCFGGTCNTPGCSCDPWPVCSRN.

Residues 1–30 (GVPVCGETCFGGTCNTPGCSCDPWPVCSRN) constitute a cross-link (cyclopeptide (Gly-Asn)). Disulfide bonds link Cys5–Cys19, Cys9–Cys21, and Cys14–Cys27.

This is a cyclic peptide.

In terms of biological role, probably participates in a plant defense mechanism. This chain is Varv peptide G, found in Viola arvensis (European field pansy).